Here is a 150-residue protein sequence, read N- to C-terminus: Globin (150 aa).

Positions 11-150 (PLSAAEKTKI…MICILLRSAY (140 aa)) constitute a Globin domain. Residues H74 and H106 each contribute to the heme b site.

This sequence belongs to the globin family. In terms of assembly, monomer.

The sequence is that of Globin from Lampetra fluviatilis (European river lamprey).